A 220-amino-acid chain; its full sequence is Pyridoxine/pyridoxamine 5'-phosphate oxidase (220 aa).

Residues 69 to 74 (RVVLLK), 84 to 85 (YT), Arg90, Lys91, and Gln113 contribute to the FMN site. Position 74 (Lys74) interacts with substrate. Tyr131, Arg135, and Ser139 together coordinate substrate. Residues 148–149 (QS) and Trp193 each bind FMN. Position 199-201 (199-201 (RLH)) interacts with substrate. Residue Arg203 participates in FMN binding.

Belongs to the pyridoxamine 5'-phosphate oxidase family. As to quaternary structure, homodimer. Requires FMN as cofactor.

The catalysed reaction is pyridoxamine 5'-phosphate + O2 + H2O = pyridoxal 5'-phosphate + H2O2 + NH4(+). The enzyme catalyses pyridoxine 5'-phosphate + O2 = pyridoxal 5'-phosphate + H2O2. The protein operates within cofactor metabolism; pyridoxal 5'-phosphate salvage; pyridoxal 5'-phosphate from pyridoxamine 5'-phosphate: step 1/1. It functions in the pathway cofactor metabolism; pyridoxal 5'-phosphate salvage; pyridoxal 5'-phosphate from pyridoxine 5'-phosphate: step 1/1. Its function is as follows. Catalyzes the oxidation of either pyridoxine 5'-phosphate (PNP) or pyridoxamine 5'-phosphate (PMP) into pyridoxal 5'-phosphate (PLP). The chain is Pyridoxine/pyridoxamine 5'-phosphate oxidase from Myxococcus xanthus.